Consider the following 296-residue polypeptide: 33 kDa chaperonin (296 aa).

2 disulfides stabilise this stretch: Cys-233-Cys-235 and Cys-267-Cys-270.

Belongs to the HSP33 family. Post-translationally, under oxidizing conditions two disulfide bonds are formed involving the reactive cysteines. Under reducing conditions zinc is bound to the reactive cysteines and the protein is inactive.

It localises to the cytoplasm. Its function is as follows. Redox regulated molecular chaperone. Protects both thermally unfolding and oxidatively damaged proteins from irreversible aggregation. Plays an important role in the bacterial defense system toward oxidative stress. This is 33 kDa chaperonin from Actinobacillus pleuropneumoniae serotype 3 (strain JL03).